Consider the following 420-residue polypeptide: Enolase (420 aa).

Residue glutamine 162 coordinates (2R)-2-phosphoglycerate. Glutamate 206 serves as the catalytic Proton donor. Mg(2+) contacts are provided by aspartate 241, glutamate 282, and aspartate 308. Residues lysine 333, arginine 362, serine 363, and lysine 384 each coordinate (2R)-2-phosphoglycerate. The active-site Proton acceptor is the lysine 333.

This sequence belongs to the enolase family. Requires Mg(2+) as cofactor.

It localises to the cytoplasm. It is found in the secreted. The protein localises to the cell surface. It carries out the reaction (2R)-2-phosphoglycerate = phosphoenolpyruvate + H2O. Its pathway is carbohydrate degradation; glycolysis; pyruvate from D-glyceraldehyde 3-phosphate: step 4/5. Functionally, catalyzes the reversible conversion of 2-phosphoglycerate (2-PG) into phosphoenolpyruvate (PEP). It is essential for the degradation of carbohydrates via glycolysis. The polypeptide is Enolase (Methanothrix thermoacetophila (strain DSM 6194 / JCM 14653 / NBRC 101360 / PT) (Methanosaeta thermophila)).